Reading from the N-terminus, the 320-residue chain is Porphobilinogen deaminase (320 aa).

Cys-248 carries the S-(dipyrrolylmethanemethyl)cysteine modification.

Belongs to the HMBS family. In terms of assembly, monomer. The cofactor is dipyrromethane.

It carries out the reaction 4 porphobilinogen + H2O = hydroxymethylbilane + 4 NH4(+). It functions in the pathway porphyrin-containing compound metabolism; protoporphyrin-IX biosynthesis; coproporphyrinogen-III from 5-aminolevulinate: step 2/4. Its pathway is porphyrin-containing compound metabolism; chlorophyll biosynthesis. Functionally, tetrapolymerization of the monopyrrole PBG into the hydroxymethylbilane pre-uroporphyrinogen in several discrete steps. The chain is Porphobilinogen deaminase from Synechococcus elongatus (strain ATCC 33912 / PCC 7942 / FACHB-805) (Anacystis nidulans R2).